A 296-amino-acid chain; its full sequence is Tyrosine recombinase XerC (296 aa).

The region spanning 1 to 84 is the Core-binding (CB) domain; it reads MEKIQQAYLY…TLRSFYEYWM (84 aa). The region spanning 105–286 is the Tyr recombinase domain; it reads YLPHFFYEEE…TNEQLRKVYL (182 aa). Catalysis depends on residues Arg-145, Lys-169, His-238, Arg-241, and His-264. The O-(3'-phospho-DNA)-tyrosine intermediate role is filled by Tyr-273.

This sequence belongs to the 'phage' integrase family. XerC subfamily. Forms a cyclic heterotetrameric complex composed of two molecules of XerC and two molecules of XerD.

It localises to the cytoplasm. Functionally, site-specific tyrosine recombinase, which acts by catalyzing the cutting and rejoining of the recombining DNA molecules. The XerC-XerD complex is essential to convert dimers of the bacterial chromosome into monomers to permit their segregation at cell division. It also contributes to the segregational stability of plasmids. The protein is Tyrosine recombinase XerC of Staphylococcus saprophyticus subsp. saprophyticus (strain ATCC 15305 / DSM 20229 / NCIMB 8711 / NCTC 7292 / S-41).